The chain runs to 363 residues: Small ribosomal subunit biogenesis GTPase RsgA (363 aa).

The 157-residue stretch at 112 to 268 (HQQVIAANID…LIDTPGMREL (157 aa)) folds into the CP-type G domain. Residues 157 to 160 (TKAD) and 210 to 218 (GSSGAGKST) each bind GTP. Residues Cys-291, Cys-296, His-298, and Cys-304 each coordinate Zn(2+). The tract at residues 340–363 (RVAQNNRGKGSGKRPASIDRPGRR) is disordered.

It belongs to the TRAFAC class YlqF/YawG GTPase family. RsgA subfamily. As to quaternary structure, monomer. Associates with 30S ribosomal subunit, binds 16S rRNA. Zn(2+) is required as a cofactor.

It localises to the cytoplasm. Its function is as follows. One of several proteins that assist in the late maturation steps of the functional core of the 30S ribosomal subunit. Helps release RbfA from mature subunits. May play a role in the assembly of ribosomal proteins into the subunit. Circularly permuted GTPase that catalyzes slow GTP hydrolysis, GTPase activity is stimulated by the 30S ribosomal subunit. In Xanthomonas oryzae pv. oryzae (strain MAFF 311018), this protein is Small ribosomal subunit biogenesis GTPase RsgA.